The primary structure comprises 251 residues: MFRLVYTASSKFKYIAQTLAKINDEGVFEFSLDGLRAWIMSPDKTSLAILEMPSLSFEEYMVEEEMRVVLRTDELNKISKRATRNDDIIFQWNAEEQALEVELRDRKLGFSRKFLVPATSVGAEEMRRLKLEPTVSFTILTDDLKAMIQDVKVVGDFAEFEASEGQVVVRSQAEEKEYEWVMKPGDVLLSLEVEEDAKSIYSRQVLEIATKPVGAAESVKVSFASDYPMKIEYTFPNGERMELYMAPSLAG.

This sequence belongs to the PCNA family. Heterotrimer. The subunits circularize to form a toroid; DNA passes through its center. Replication factor C (RFC) is required to load the toroid on the DNA.

Its function is as follows. Sliding clamp subunit that acts as a moving platform for DNA processing. Responsible for tethering the catalytic subunit of DNA polymerase and other proteins to DNA during high-speed replication. This is DNA polymerase sliding clamp 2 from Aeropyrum pernix (strain ATCC 700893 / DSM 11879 / JCM 9820 / NBRC 100138 / K1).